The chain runs to 355 residues: S-adenosylmethionine:tRNA ribosyltransferase-isomerase (355 aa).

Belongs to the QueA family. In terms of assembly, monomer.

Its subcellular location is the cytoplasm. It carries out the reaction 7-aminomethyl-7-carbaguanosine(34) in tRNA + S-adenosyl-L-methionine = epoxyqueuosine(34) in tRNA + adenine + L-methionine + 2 H(+). It participates in tRNA modification; tRNA-queuosine biosynthesis. Functionally, transfers and isomerizes the ribose moiety from AdoMet to the 7-aminomethyl group of 7-deazaguanine (preQ1-tRNA) to give epoxyqueuosine (oQ-tRNA). This Burkholderia orbicola (strain AU 1054) protein is S-adenosylmethionine:tRNA ribosyltransferase-isomerase.